A 25-amino-acid chain; its full sequence is LASP1 neighbor protein (25 aa).

The chain crosses the membrane as a helical span at residues Ile4–Leu24.

Its subcellular location is the membrane. In terms of biological role, may play a key role in the skin fibroblasts (FBs)-keratinocyte-like cells (KLCs). The chain is LASP1 neighbor protein from Homo sapiens (Human).